The sequence spans 915 residues: Alanine--tRNA ligase (915 aa).

The Zn(2+) site is built by histidine 609, histidine 613, cysteine 712, and histidine 716.

This sequence belongs to the class-II aminoacyl-tRNA synthetase family. Zn(2+) is required as a cofactor.

The protein localises to the cytoplasm. The enzyme catalyses tRNA(Ala) + L-alanine + ATP = L-alanyl-tRNA(Ala) + AMP + diphosphate. In terms of biological role, catalyzes the attachment of alanine to tRNA(Ala) in a two-step reaction: alanine is first activated by ATP to form Ala-AMP and then transferred to the acceptor end of tRNA(Ala). Also edits incorrectly charged Ser-tRNA(Ala) and Gly-tRNA(Ala) via its editing domain. The sequence is that of Alanine--tRNA ligase from Methanoculleus marisnigri (strain ATCC 35101 / DSM 1498 / JR1).